The primary structure comprises 490 residues: Arginine decarboxylase (490 aa).

K226 carries the post-translational modification N6-(pyridoxal phosphate)lysine.

The protein belongs to the Orn/Lys/Arg decarboxylase class-I family. Pyridoxal 5'-phosphate is required as a cofactor.

Its subcellular location is the cytoplasm. It catalyses the reaction L-arginine + H(+) = agmatine + CO2. It functions in the pathway amine and polyamine biosynthesis; agmatine biosynthesis; agmatine from L-arginine: step 1/1. Catalyzes the formation of agmatine from arginine. The sequence is that of Arginine decarboxylase (speA) from Bacillus subtilis (strain 168).